A 279-amino-acid chain; its full sequence is Protein FAM151B (279 aa).

It belongs to the menorin family.

Essential for survival of retinal photoreceptor cells. In Mus musculus (Mouse), this protein is Protein FAM151B (Fam151b).